The primary structure comprises 589 residues: Pentalenolactone D synthase (589 aa).

Residues Ile60–Gly61, Asp82–Glu83, Thr90–Trp91, Asp102–Val103, Tyr108, Val152, and Met491 contribute to the FAD site.

This sequence belongs to the FAD-binding monooxygenase family. FAD is required as a cofactor.

The enzyme catalyses 1-deoxy-11-oxopentalenate + NADPH + O2 + H(+) = pentalenolactone D + NADP(+) + H2O. The protein operates within antibiotic biosynthesis; pentalenolactone biosynthesis. In terms of biological role, catalyzes the flavin-dependent Baeyer-Villiger oxidation of 1-deoxy-11-oxopentalenic acid to pentalenolactone D in the biosynthesis of pentalenolactone antibiotic. The chain is Pentalenolactone D synthase (pntE) from Streptomyces arenae.